The chain runs to 420 residues: Dynein axonemal assembly factor 4 (420 aa).

A CS domain is found at 3–87; that stretch reads LQVSDYSWQQ…KEAAMWETLS (85 aa). The interval 7–103 is mediates interaction with ESR1 and STUB1; the sequence is DYSWQQTKTA…EMMQRIREKS (97 aa). TPR repeat units lie at residues 290 to 323, 324 to 357, and 366 to 399; these read PEWL…NNKM, PLLY…LMPP, and MKAH…DPSN.

As to quaternary structure, interacts with ZMYND10. Interacts with STUB1. Interacts with ESR1 and ESR2. Interacts with DNAAF2. Interacts with CCT3, CCT4, CCT5 and CCT8. Interacts with DNAAF6/PIH1D3.

Its subcellular location is the nucleus. It is found in the cytoplasm. The protein resides in the cell projection. It localises to the neuron projection. The protein localises to the dynein axonemal particle. In terms of biological role, involved in neuronal migration during development of the cerebral neocortex. May regulate the stability and proteasomal degradation of the estrogen receptors that play an important role in neuronal differentiation, survival and plasticity. Axonemal dynein assembly factor required for ciliary motility. In Pan troglodytes (Chimpanzee), this protein is Dynein axonemal assembly factor 4.